The primary structure comprises 212 residues: Probable octanoyltransferase (212 aa).

In terms of domain architecture, BPL/LPL catalytic spans 28–199 (GVSEEMILVT…NLETLLQRQE (172 aa)). Substrate is bound by residues 66–73 (RGGDATYH), 130–132 (SVG), and 143–145 (GVA). Cysteine 161 functions as the Acyl-thioester intermediate in the catalytic mechanism.

Belongs to the LipB family.

It is found in the cytoplasm. It catalyses the reaction octanoyl-[ACP] + L-lysyl-[protein] = N(6)-octanoyl-L-lysyl-[protein] + holo-[ACP] + H(+). It functions in the pathway protein modification; protein lipoylation via endogenous pathway; protein N(6)-(lipoyl)lysine from octanoyl-[acyl-carrier-protein]: step 1/2. Its function is as follows. Catalyzes the transfer of endogenously produced octanoic acid from octanoyl-acyl-carrier-protein onto the lipoyl domains of lipoate-dependent enzymes. Lipoyl-ACP can also act as a substrate although octanoyl-ACP is likely to be the physiological substrate. The polypeptide is Probable octanoyltransferase (Pyrobaculum arsenaticum (strain DSM 13514 / JCM 11321 / PZ6)).